A 71-amino-acid polypeptide reads, in one-letter code: DNA-directed RNA polymerases I, II, and III subunit RPABC5 (71 aa).

Residues Cys7, Cys10, Cys44, and Cys45 each contribute to the Zn(2+) site.

It belongs to the archaeal Rpo10/eukaryotic RPB10 RNA polymerase subunit family. As to quaternary structure, component of the RNA polymerase I (Pol I), RNA polymerase II (Pol II) and RNA polymerase III (Pol III) complexes consisting of at least 13, 12 and 17 subunits, respectively.

The protein localises to the nucleus. Its function is as follows. DNA-dependent RNA polymerase catalyzes the transcription of DNA into RNA using the four ribonucleoside triphosphates as substrates. Common component of RNA polymerases I, II and III which synthesize ribosomal RNA precursors, mRNA precursors and many functional non-coding RNAs, and a small RNAs, such as 5S rRNA and tRNAs, respectively. Pol II is the central component of the basal RNA polymerase II transcription machinery. Pols are composed of mobile elements that move relative to each other. In Pol II, RBP10 is part of the core element with the central large cleft. This Brassica napus (Rape) protein is DNA-directed RNA polymerases I, II, and III subunit RPABC5.